A 123-amino-acid chain; its full sequence is Large ribosomal subunit protein bL19 (123 aa).

The protein belongs to the bacterial ribosomal protein bL19 family.

In terms of biological role, this protein is located at the 30S-50S ribosomal subunit interface and may play a role in the structure and function of the aminoacyl-tRNA binding site. This is Large ribosomal subunit protein bL19 from Laribacter hongkongensis (strain HLHK9).